We begin with the raw amino-acid sequence, 240 residues long: MGNDGGSLPTRNELVKEPGKVPPLDIDFKRSVKSSQFSQCAITDEPLYPPIVSCGLGKLYNKASILQMLLDRSSVPKSPSHIKSLKDVVQLQVELDDSGKVLWLCPITRHVMSDTYQFAYIVPCGHVFEYSALKQFGEKMCFQCNQVYEEKDVIPINPNAEQLKTLSKRLLDLALSEKTHSLNKASKKSNKNGDKKRKHVSKSNSKHAKHELRTNRMLDGENVKSETSVTDMERVKRVKI.

Disordered regions lie at residues 1-22 and 181-240; these read MGNDGGSLPTRNELVKEPGKVP and SLNK…RVKI. Positions 185–210 are enriched in basic residues; that stretch reads ASKKSNKNGDKKRKHVSKSNSKHAKH. Basic and acidic residues-rich tracts occupy residues 211-224 and 231-240; these read ELRTNRMLDGENVK and DMERVKRVKI.

It belongs to the rtf2 family. In terms of assembly, interacts with pcn1.

It is found in the nucleus. Putative splicing factor that is required for the correct splicing of a subset of pre-mRNAs. Required for the correct splicing of rtf1, a replication termination factor that mediates site-specific replication termination at replication barrier RTS1. The sequence is that of Splicing factor rtf2 from Schizosaccharomyces pombe (strain 972 / ATCC 24843) (Fission yeast).